The primary structure comprises 203 residues: Small ribosomal subunit protein uS4 (203 aa).

An S4 RNA-binding domain is found at 93 to 156 (RRLDNVVYRL…MKVPAILEAV (64 aa)).

It belongs to the universal ribosomal protein uS4 family. As to quaternary structure, part of the 30S ribosomal subunit. Contacts protein S5. The interaction surface between S4 and S5 is involved in control of translational fidelity.

One of the primary rRNA binding proteins, it binds directly to 16S rRNA where it nucleates assembly of the body of the 30S subunit. Functionally, with S5 and S12 plays an important role in translational accuracy. The sequence is that of Small ribosomal subunit protein uS4 from Streptococcus equi subsp. equi (strain 4047).